Here is a 299-residue protein sequence, read N- to C-terminus: tRNA-cytidine(32) 2-sulfurtransferase (299 aa).

The PP-loop motif motif lies at 49–54 (SGGKDS). 3 residues coordinate [4Fe-4S] cluster: C124, C127, and C215.

The protein belongs to the TtcA family. In terms of assembly, homodimer. Mg(2+) is required as a cofactor. It depends on [4Fe-4S] cluster as a cofactor.

It localises to the cytoplasm. It catalyses the reaction cytidine(32) in tRNA + S-sulfanyl-L-cysteinyl-[cysteine desulfurase] + AH2 + ATP = 2-thiocytidine(32) in tRNA + L-cysteinyl-[cysteine desulfurase] + A + AMP + diphosphate + H(+). Its pathway is tRNA modification. Functionally, catalyzes the ATP-dependent 2-thiolation of cytidine in position 32 of tRNA, to form 2-thiocytidine (s(2)C32). The sulfur atoms are provided by the cysteine/cysteine desulfurase (IscS) system. The protein is tRNA-cytidine(32) 2-sulfurtransferase of Deinococcus radiodurans (strain ATCC 13939 / DSM 20539 / JCM 16871 / CCUG 27074 / LMG 4051 / NBRC 15346 / NCIMB 9279 / VKM B-1422 / R1).